The primary structure comprises 155 residues: Pre-hexon-linking protein VIII (155 aa).

Residues 44–84 constitute a propeptide that is removed on maturation; it reads GVHRTKDIKPEDLVGRGIQLNSYQPPTTRLKPERVFQLAGG.

It belongs to the adenoviridae hexon-linking protein family. In terms of assembly, interacts with the peripentonal hexons as well as the hexons in the facets. Part of a complex composed of the core-capsid bridging protein, the endosome lysis protein VI and the hexon-linking protein VIII; these interactions bridge the virus core to the capsid. In terms of processing, cleaved by the viral protease during virion maturation. May cause the middle segment to be shed from the capsid.

Its subcellular location is the virion. The protein localises to the host nucleus. Its function is as follows. Structural component of the virion that acts as a cement protein on the capsid interior and which glue the peripentonal hexons and group-of-nine hexons together. This chain is Pre-hexon-linking protein VIII, found in Bos taurus (Bovine).